Reading from the N-terminus, the 369-residue chain is 3-dehydroquinate synthase (369 aa).

NAD(+) contacts are provided by residues 80-85 (DGEQYK), 114-118 (GVIGD), 138-139 (TT), Lys151, Lys160, and 178-181 (TLKT). Glu193, His256, and His273 together coordinate Zn(2+).

This sequence belongs to the sugar phosphate cyclases superfamily. Dehydroquinate synthase family. It depends on Co(2+) as a cofactor. Zn(2+) serves as cofactor. NAD(+) is required as a cofactor.

It is found in the cytoplasm. The enzyme catalyses 7-phospho-2-dehydro-3-deoxy-D-arabino-heptonate = 3-dehydroquinate + phosphate. It participates in metabolic intermediate biosynthesis; chorismate biosynthesis; chorismate from D-erythrose 4-phosphate and phosphoenolpyruvate: step 2/7. Catalyzes the conversion of 3-deoxy-D-arabino-heptulosonate 7-phosphate (DAHP) to dehydroquinate (DHQ). This chain is 3-dehydroquinate synthase, found in Psychrobacter cryohalolentis (strain ATCC BAA-1226 / DSM 17306 / VKM B-2378 / K5).